The primary structure comprises 496 residues: Glycine receptor subunit beta (496 aa).

Residues 1–22 (MKFSLAVSFFILMSLLFEDACS) form the signal peptide. At 23–268 (KEKSSKKGKG…IFTLRRQVGF (246 aa)) the chain is on the extracellular side. N54 carries N-linked (GlcNAc...) asparagine glycosylation. The glycine site is built by R108 and S174. A disulfide bridge links C183 with C197. N-linked (GlcNAc...) asparagine glycosylation occurs at N242. C243 and C255 are joined by a disulfide. T250 contributes to the glycine binding site. A helical transmembrane segment spans residues 269 to 289 (YMMGVYAPTLLIVVLSWLSFW). Topologically, residues 290–294 (INPDA) are cytoplasmic. Residues 295–315 (SAARVPLGIFSVLSLASECTT) form a helical membrane-spanning segment. Residues 316–327 (LAAELPKVSYVK) lie on the Extracellular side of the membrane. Residues 328-349 (ALDVWLIACLLFGFASLVEYAV) traverse the membrane as a helical segment. The Cytoplasmic segment spans residues 350-471 (VQVMLNNPKR…KPVIPTAAKR (122 aa)). T391 carries the post-translational modification Phosphothreonine. A helical transmembrane segment spans residues 472 to 495 (IDLYARALFPFCFLFFNVIYWSIY). Residue L496 is a topological domain, extracellular.

This sequence belongs to the ligand-gated ion channel (TC 1.A.9) family. Glycine receptor (TC 1.A.9.3) subfamily. GLRB sub-subfamily. As to quaternary structure, forms heteropentamers with glycin receptor alpha subunits. Heteropentamers with GLRA1 can be composed of two GLRA1 and three GLRB subunits, or three GLRA1 and two GLRB subunits, or four GLRA1 subunits and one GLRB subunit. Forms heteropentamers with GLRA2. Functional GLRB-GLRA2 heteropentamers contain four GLRA2 subunits and one GLRB subunit, although alternative subunit composition cannot be excluded. Forms a heteropentamer with GLRA3. Interacts with GPHN. Detected in spinal cord and brain stem (at protein level). Detected in spinal cord, cerebellum and brain cortex.

The protein resides in the postsynaptic cell membrane. Its subcellular location is the cell membrane. The protein localises to the synapse. It localises to the perikaryon. It is found in the cell projection. The protein resides in the dendrite. Its subcellular location is the cytoplasm. The catalysed reaction is chloride(in) = chloride(out). Its activity is regulated as follows. Channel opening is triggered by extracellular glycine. Heteropentameric channels composed of GLRB and GLRA1 are activated by lower glycine levels than homopentameric GLRA1. Functionally, subunit of heteromeric glycine-gated chloride channels. Plays an important role in the down-regulation of neuronal excitability. Contributes to the generation of inhibitory postsynaptic currents. The chain is Glycine receptor subunit beta (Glrb) from Rattus norvegicus (Rat).